Consider the following 386-residue polypeptide: Endonuclease III homolog 2, chloroplastic (386 aa).

A chloroplast-targeting transit peptide spans 1-50 (MILTGAASTFPIVARVLNAMNRRMYAATTLSSAKSISAESLNLRSDSNSE). A disordered region spans residues 44–66 (RSDSNSEAAHGASESETRVSLRK). Positions 252–278 (YDGDIPRTLEELLSLPGVGPKIAHLVL) constitute a HhH domain. The active-site Nucleophile; for N-glycosylase activity is Lys272. [4Fe-4S] cluster contacts are provided by Cys347, Cys354, Cys357, and Cys363.

It belongs to the Nth/MutY family. [4Fe-4S] cluster is required as a cofactor.

Its subcellular location is the plastid. The protein localises to the chloroplast stroma. It is found in the chloroplast nucleoid. It catalyses the reaction 2'-deoxyribonucleotide-(2'-deoxyribose 5'-phosphate)-2'-deoxyribonucleotide-DNA = a 3'-end 2'-deoxyribonucleotide-(2,3-dehydro-2,3-deoxyribose 5'-phosphate)-DNA + a 5'-end 5'-phospho-2'-deoxyribonucleoside-DNA + H(+). Functionally, bifunctional DNA N-glycosylase with associated apurinic/apyrimidinic (AP) lyase function that catalyzes the first step in base excision repair (BER), the primary repair pathway for the repair of oxidative DNA damage. The DNA N-glycosylase activity releases the damaged DNA base from DNA by cleaving the N-glycosidic bond, leaving an AP site. The AP lyase activity cleaves the phosphodiester bond 3' to the AP site by a beta-elimination. Primarily recognizes and repairs oxidative base damage of pyrimidines. The chain is Endonuclease III homolog 2, chloroplastic (NTH2) from Arabidopsis thaliana (Mouse-ear cress).